The chain runs to 430 residues: Tektin-2 (430 aa).

2 coiled-coil regions span residues 80–162 (KCLT…FEQL) and 225–382 (NKDR…CKAN).

Belongs to the tektin family. As to quaternary structure, microtubule inner protein component of sperm flagellar doublet microtubules. May interact with CCDC172. Post-translationally, tyrosine phosphorylated. Ubiquitinated, leading to its degradation. Deubiquitinated by USP16, promoting its stability. Expressed at high levels in testis, trachea and fetal lung, and at lower levels in ovary, pituitary, adult lung, fetal brain and fetal kidney.

The protein localises to the cytoplasm. It is found in the cytoskeleton. It localises to the cilium axoneme. The protein resides in the flagellum axoneme. Its subcellular location is the microtubule organizing center. In terms of biological role, microtubule inner protein (MIP) part of the dynein-decorated doublet microtubules (DMTs) in cilia and flagellar axoneme. Plays a key role in the assembly or attachment of the inner dynein arm to microtubules in sperm flagella and tracheal cilia. Forms filamentous polymers in the walls of ciliary and flagellar microtubules. This chain is Tektin-2, found in Homo sapiens (Human).